We begin with the raw amino-acid sequence, 319 residues long: ATP-dependent 6-phosphofructokinase (319 aa).

Glycine 11 contacts ATP. 21–25 serves as a coordination point for ADP; the sequence is RAVVR. ATP contacts are provided by residues 72 to 73 and 102 to 105; these read RC and GEGS. Mg(2+) is bound at residue glutamate 103. 126 to 128 serves as a coordination point for substrate; the sequence is TID. The Proton acceptor role is filled by aspartate 128. Residue lysine 155 participates in ADP binding. Substrate-binding positions include arginine 163 and 170 to 172; that span reads MGR. ADP is bound by residues 186–188, arginine 212, and 214–216; these read GAE and KIN. Substrate is bound by residues glutamate 223, arginine 244, and 250–253; that span reads HVQR.

It belongs to the phosphofructokinase type A (PFKA) family. ATP-dependent PFK group I subfamily. Prokaryotic clade 'B1' sub-subfamily. In terms of assembly, homotetramer. The cofactor is Mg(2+).

The protein localises to the cytoplasm. The enzyme catalyses beta-D-fructose 6-phosphate + ATP = beta-D-fructose 1,6-bisphosphate + ADP + H(+). The protein operates within carbohydrate degradation; glycolysis; D-glyceraldehyde 3-phosphate and glycerone phosphate from D-glucose: step 3/4. Allosterically activated by ADP and other diphosphonucleosides, and allosterically inhibited by phosphoenolpyruvate. Catalyzes the phosphorylation of D-fructose 6-phosphate to fructose 1,6-bisphosphate by ATP, the first committing step of glycolysis. This chain is ATP-dependent 6-phosphofructokinase, found in Thermotoga petrophila (strain ATCC BAA-488 / DSM 13995 / JCM 10881 / RKU-1).